We begin with the raw amino-acid sequence, 472 residues long: Glutamate--tRNA ligase 1 (472 aa).

The 'HIGH' region motif lies at 13–23; it reads PSPTGYLHIGG. The Zn(2+) site is built by cysteine 102, cysteine 104, cysteine 129, and glutamate 131. Residues 239–243 carry the 'KMSKS' region motif; the sequence is RLSKR. Residue lysine 242 participates in ATP binding.

Belongs to the class-I aminoacyl-tRNA synthetase family. Glutamate--tRNA ligase type 1 subfamily. In terms of assembly, monomer. The cofactor is Zn(2+).

The protein resides in the cytoplasm. It catalyses the reaction tRNA(Glu) + L-glutamate + ATP = L-glutamyl-tRNA(Glu) + AMP + diphosphate. Catalyzes the attachment of glutamate to tRNA(Glu) in a two-step reaction: glutamate is first activated by ATP to form Glu-AMP and then transferred to the acceptor end of tRNA(Glu). This is Glutamate--tRNA ligase 1 from Syntrophus aciditrophicus (strain SB).